Reading from the N-terminus, the 131-residue chain is Histone H2A-beta (131 aa).

Residue Ser-2 is modified to N-acetylserine. 2 positions are modified to N6-acetyllysine: Lys-5 and Lys-9. Gln-106 carries the post-translational modification N5-methylglutamine. The residue at position 128 (Ser-128) is a Phosphoserine. The short motif at 128-129 (SQ) is the [ST]-Q motif element.

It belongs to the histone H2A family. As to quaternary structure, the nucleosome is a histone octamer containing two molecules each of H2A, H2B, H3 and H4 assembled in one H3-H4 heterotetramer and two H2A-H2B heterodimers. The octamer wraps approximately 147 bp of DNA. Phosphorylated to form H2AS128ph (gamma-H2A) in response to DNA double-strand breaks (DSBs) generated by exogenous genotoxic agents and by stalled replication forks. Phosphorylation is dependent on the DNA damage checkpoint kinases rad3/ATR and tel1/ATM, spreads on either side of a detected DSB site and may mark the surrounding chromatin for recruitment of proteins required for DNA damage signaling and repair. Gamma-H2A is required for recruiting crb2, a modulator of DNA damage checkpoint signaling, to DSB sites. Gamma-H2A is removed from the DNA prior to the strand invasion-primer extension step of the repair process and subsequently dephosphorylated. Dephosphorylation is necessary for efficient recovery from the DNA damage checkpoint. In terms of processing, acetylated by esa1 to form H2AK4ac and H2AK7ac.

It is found in the nucleus. The protein localises to the chromosome. Its function is as follows. Core component of nucleosome which plays a central role in DNA double strand break (DSB) repair. Nucleosomes wrap and compact DNA into chromatin, limiting DNA accessibility to the cellular machineries which require DNA as a template. Histones thereby play a central role in transcription regulation, DNA repair, DNA replication and chromosomal stability. DNA accessibility is regulated via a complex set of post-translational modifications of histones, also called histone code, and nucleosome remodeling. The polypeptide is Histone H2A-beta (hta2) (Schizosaccharomyces pombe (strain 972 / ATCC 24843) (Fission yeast)).